Consider the following 269-residue polypeptide: Neurotrophic factor BDNF precursor form (269 aa).

Positions Met-1–Ala-18 are cleaved as a signal peptide. The propeptide occupies Ala-19–Arg-150. Disordered stretches follow at residues Ala-39 to Leu-61 and Ala-82 to Ala-104. A glycan (N-linked (GlcNAc...) asparagine) is linked at Asn-143. Disulfide bonds link Cys-163-Cys-230, Cys-208-Cys-259, and Cys-218-Cys-261.

It belongs to the NGF-beta family.

Its function is as follows. BDNF promotes the survival of neuronal populations that are all located either in the central nervous system or directly connected to it. This chain is Neurotrophic factor BDNF precursor form (bdnf), found in Xiphophorus maculatus (Southern platyfish).